Consider the following 505-residue polypeptide: Ion-translocating oxidoreductase complex subunit C (505 aa).

2 4Fe-4S ferredoxin-type domains span residues 381 to 410 (ELNN…EQLY) and 420 to 449 (KTQI…MSYY). The [4Fe-4S] cluster site is built by C390, C393, C396, C400, C429, C432, C435, and C439.

The protein belongs to the 4Fe4S bacterial-type ferredoxin family. RnfC subfamily. As to quaternary structure, the complex is composed of six subunits: RnfA, RnfB, RnfC, RnfD, RnfE and RnfG. [4Fe-4S] cluster is required as a cofactor.

It localises to the cell inner membrane. In terms of biological role, part of a membrane-bound complex that couples electron transfer with translocation of ions across the membrane. The sequence is that of Ion-translocating oxidoreductase complex subunit C from Buchnera aphidicola subsp. Baizongia pistaciae (strain Bp).